Here is a 135-residue protein sequence, read N- to C-terminus: Large ribosomal subunit protein bL19 (135 aa).

Belongs to the bacterial ribosomal protein bL19 family.

Functionally, this protein is located at the 30S-50S ribosomal subunit interface and may play a role in the structure and function of the aminoacyl-tRNA binding site. The sequence is that of Large ribosomal subunit protein bL19 from Xanthomonas euvesicatoria pv. vesicatoria (strain 85-10) (Xanthomonas campestris pv. vesicatoria).